We begin with the raw amino-acid sequence, 858 residues long: Leucine--tRNA ligase (858 aa).

Residues 42-52 (PYPSGRLHMGH) carry the 'HIGH' region motif. Residues 618–622 (KMSKS) carry the 'KMSKS' region motif. Residue lysine 621 participates in ATP binding.

The protein belongs to the class-I aminoacyl-tRNA synthetase family.

It localises to the cytoplasm. The enzyme catalyses tRNA(Leu) + L-leucine + ATP = L-leucyl-tRNA(Leu) + AMP + diphosphate. The polypeptide is Leucine--tRNA ligase (Aliivibrio fischeri (strain ATCC 700601 / ES114) (Vibrio fischeri)).